Here is an 858-residue protein sequence, read N- to C-terminus: Leucine--tRNA ligase (858 aa).

Positions 42-52 (PYPSGRLHMGH) match the 'HIGH' region motif. The 'KMSKS' region motif lies at 618 to 622 (KMSKS). K621 is an ATP binding site.

The protein belongs to the class-I aminoacyl-tRNA synthetase family.

The protein resides in the cytoplasm. The enzyme catalyses tRNA(Leu) + L-leucine + ATP = L-leucyl-tRNA(Leu) + AMP + diphosphate. This is Leucine--tRNA ligase from Vibrio cholerae serotype O1 (strain ATCC 39315 / El Tor Inaba N16961).